A 409-amino-acid chain; its full sequence is Argininosuccinate synthase (409 aa).

ATP-binding positions include 11–19 and A38; that span reads AYSGGLDTS. L-citrulline-binding residues include Y91 and S96. Residue G121 coordinates ATP. Positions 123, 127, and 128 each coordinate L-aspartate. N127 lines the L-citrulline pocket. R131, S182, S191, E267, and Y279 together coordinate L-citrulline.

This sequence belongs to the argininosuccinate synthase family. Type 1 subfamily. Homotetramer.

It is found in the cytoplasm. It carries out the reaction L-citrulline + L-aspartate + ATP = 2-(N(omega)-L-arginino)succinate + AMP + diphosphate + H(+). The protein operates within amino-acid biosynthesis; L-arginine biosynthesis; L-arginine from L-ornithine and carbamoyl phosphate: step 2/3. The chain is Argininosuccinate synthase from Nitrobacter hamburgensis (strain DSM 10229 / NCIMB 13809 / X14).